Consider the following 211-residue polypeptide: LexA repressor (211 aa).

Residues 30–50 (RVEIAREIGFKSPNAAEEHLK) constitute a DNA-binding region (H-T-H motif). Active-site for autocatalytic cleavage activity residues include Ser-128 and Lys-165.

The protein belongs to the peptidase S24 family. In terms of assembly, homodimer.

It catalyses the reaction Hydrolysis of Ala-|-Gly bond in repressor LexA.. Represses a number of genes involved in the response to DNA damage (SOS response), including recA and lexA. In the presence of single-stranded DNA, RecA interacts with LexA causing an autocatalytic cleavage which disrupts the DNA-binding part of LexA, leading to derepression of the SOS regulon and eventually DNA repair. In Haemophilus ducreyi (strain 35000HP / ATCC 700724), this protein is LexA repressor.